We begin with the raw amino-acid sequence, 542 residues long: Glutamyl-tRNA(Gln) amidotransferase subunit B, mitochondrial (542 aa).

A mitochondrion-targeting transit peptide spans 1 to 66 (MRVFRRFYQV…PNSHTSFFDI (66 aa)).

It belongs to the GatB/GatE family. GatB subfamily. As to quaternary structure, subunit of the heterotrimeric GatFAB amidotransferase (AdT) complex, composed of A, B and F subunits.

Its subcellular location is the mitochondrion. It carries out the reaction L-glutamyl-tRNA(Gln) + L-glutamine + ATP + H2O = L-glutaminyl-tRNA(Gln) + L-glutamate + ADP + phosphate + H(+). Allows the formation of correctly charged Gln-tRNA(Gln) through the transamidation of misacylated Glu-tRNA(Gln) in the mitochondria. The reaction takes place in the presence of glutamine and ATP through an activated gamma-phospho-Glu-tRNA(Gln). The protein is Glutamyl-tRNA(Gln) amidotransferase subunit B, mitochondrial of Zygosaccharomyces rouxii (strain ATCC 2623 / CBS 732 / NBRC 1130 / NCYC 568 / NRRL Y-229).